Here is an 805-residue protein sequence, read N- to C-terminus: Na(+)/H(+) antiporter subunit A (805 aa).

A run of 21 helical transmembrane segments spans residues 4–22 (LHWATISPFLLAILIPFLY), 29–51 (HTGWFVLVLPLVLFIYFIQYLSI), 80–102 (SLLFALLITGIGTLVILYSIFYL), 109–128 (LNNFYVYLLMFMGAMLGVVL), 132–154 (LIVLYVFWELTSLASSLLISYWF), 167–189 (MLITVFGGFAMLGGFSLLYVMTG), 209–231 (FLPAMILVLLGAFTKSAQFPFHI), 244–266 (SAYLHSATMVKAGIYLVARLTPV), 271–293 (AEWFWLLTGFGVVTLLWGSTSAV), 300–322 (GILAFSTVSQLGLIMTLLGLGSA), 332–354 (PAFYSFAIMAAIFHLINHATFKG), 375–397 (LGGLMAIMPVTFTVSLIGLASMA), 431–453 (IIIVVLAWIASVFTFLYCLIMFF), 474–496 (IGMLISPVILGSLVIVFGFFPNI), 529–551 (GFNAELFMTMGVVAAGIILFLMM), 597–614 (YFAYMIVFMILLLGYTMF), 629–651 (IAPYIWVITIVFIVATLSIPFIN), 656–674 (AVVVVGVIGFLLALLFVVF), 679–701 (LALTQLLIETVTVLLLMLAFYHL), 714–736 (NVLNLIISIGVGFFITAIALSSL), and 778–795 (MLEVLVLGIAALGVIALI).

It belongs to the CPA3 antiporters (TC 2.A.63) subunit A family. In terms of assembly, forms a heterooligomeric complex that consists of seven subunits: MrpA, MrpB, MrpC, MrpD, MrpE, MrpF and MrpG.

The protein localises to the cell membrane. Functionally, mnh complex is a Na(+)Li(+)/H(+) antiporter involved in Na(+) and/or Li(+) excretion and Na(+) resistance. Na(+)/H(+) antiport consumes a transmembrane electrical potential, and is thus inferred to be electrogenic. Does not transport K(+), Ca(2+) or Mg(2+). This chain is Na(+)/H(+) antiporter subunit A (mrpA), found in Alkalihalophilus pseudofirmus (strain ATCC BAA-2126 / JCM 17055 / OF4) (Bacillus pseudofirmus).